Consider the following 801-residue polypeptide: MIVTYNWLKEFVECDLSTQELGDLLTMLGLEVEGVREVGGGLDQVVVAVVEERRKHPNADKLSLCKVNNGREILDIVCGAQNFTAGDKVALAQIGAVLPGDFKIKRSKIRGEESCGMLCSERELGLSAESEGIMILPSDLPLGVPLFDALGLKDTIFEIGLTPNRADCLSVIGVAREIAAKLGKRITYPGHAVVESGEPVTQKATVIVEDPELCPRYTARFISGCSIGPSPAWLVRRLEAVGMRSINNVVDVTNYVLMEYGHPLHAFDADLLENSTIVVRRATDGEVFTTLDGQQRTLTAGDLTIRDGARSVALAGIMGGENSEIRDTTTNILLESAYFNPSAIRRTAKRLGLHTESSHRFERGADVAIVTRALDRAAALLAELAGGTVAAGIIDVYPTPVSHRTIRFRVDRCNALLGVELSANEMKALFHHLEFTTVTVEPGIIDVTVPTFRVDLEREIDLVEEVARLNGYDRIETTMPRARVFSDRPTKHQRMERRCRDLMVGQGFNEVITFSFMAPGALDRMMLGPEDGRRSVVALRNPLVDEQAVMRTTLLPGLLEAASRNLNYRSLDLRLFELRRVYLRVEGEQLPNEPLVLAGLMTGRRYPEGWNQEKHPLDFYDVKGVVEAVLDAFSVSGASYSSDDTDVFYHPGKSCTVKCGDLILGSLGELHPDVQDNFGIDQPVFYFELNFERLLSAARAASAVVPPSRFPDTFRDIAILVADETPAADIVRCIDGLRIREIESAAVFDLYKGVHVPEGKKSIAVRVRYRSTEKTLSDDEVSPLHQKVVDSLVAKLGATIR.

The tRNA-binding domain occupies 39–147 (GGGLDQVVVA…SDLPLGVPLF (109 aa)). The B5 domain maps to 401-477 (VSHRTIRFRV…RLNGYDRIET (77 aa)). Mg(2+) is bound by residues aspartate 455, aspartate 461, glutamate 464, and glutamate 465. Positions 708-801 (SRFPDTFRDI…LVAKLGATIR (94 aa)) constitute an FDX-ACB domain.

This sequence belongs to the phenylalanyl-tRNA synthetase beta subunit family. Type 1 subfamily. In terms of assembly, tetramer of two alpha and two beta subunits. Requires Mg(2+) as cofactor.

It is found in the cytoplasm. The enzyme catalyses tRNA(Phe) + L-phenylalanine + ATP = L-phenylalanyl-tRNA(Phe) + AMP + diphosphate + H(+). The chain is Phenylalanine--tRNA ligase beta subunit from Geobacter sulfurreducens (strain ATCC 51573 / DSM 12127 / PCA).